Consider the following 648-residue polypeptide: 1-deoxy-D-xylulose-5-phosphate synthase (648 aa).

Residues H79 and 120–122 (GHA) each bind thiamine diphosphate. D152 provides a ligand contact to Mg(2+). Residues 153-154 (GS), N181, F293, and E377 contribute to the thiamine diphosphate site. N181 contacts Mg(2+).

This sequence belongs to the transketolase family. DXPS subfamily. In terms of assembly, homodimer. Mg(2+) serves as cofactor. Thiamine diphosphate is required as a cofactor.

The catalysed reaction is D-glyceraldehyde 3-phosphate + pyruvate + H(+) = 1-deoxy-D-xylulose 5-phosphate + CO2. It functions in the pathway metabolic intermediate biosynthesis; 1-deoxy-D-xylulose 5-phosphate biosynthesis; 1-deoxy-D-xylulose 5-phosphate from D-glyceraldehyde 3-phosphate and pyruvate: step 1/1. Functionally, catalyzes the acyloin condensation reaction between C atoms 2 and 3 of pyruvate and glyceraldehyde 3-phosphate to yield 1-deoxy-D-xylulose-5-phosphate (DXP). In Bacteroides fragilis (strain ATCC 25285 / DSM 2151 / CCUG 4856 / JCM 11019 / LMG 10263 / NCTC 9343 / Onslow / VPI 2553 / EN-2), this protein is 1-deoxy-D-xylulose-5-phosphate synthase.